A 212-amino-acid chain; its full sequence is NADH dehydrogenase [ubiquinone] iron-sulfur protein 8, mitochondrial (212 aa).

The N-terminal 36 residues, 1–36 (MRCLTMPMLLRALAQAQAARAGHASVRGLHSSAVAA), are a transit peptide targeting the mitochondrion. 2 consecutive 4Fe-4S ferredoxin-type domains span residues 104–133 (RRYP…IEAE) and 143–172 (TRYD…EGPN). Cys-113, Cys-116, Cys-119, Cys-123, Cys-152, Cys-155, Cys-158, and Cys-162 together coordinate [4Fe-4S] cluster.

The protein belongs to the complex I 23 kDa subunit family. Core subunit of respiratory chain NADH dehydrogenase (Complex I) which is composed of 45 different subunits. This is a component of the iron-sulfur (IP) fragment of the enzyme. Interacts with RAB5IF. It depends on [4Fe-4S] cluster as a cofactor.

The protein localises to the mitochondrion inner membrane. The enzyme catalyses a ubiquinone + NADH + 5 H(+)(in) = a ubiquinol + NAD(+) + 4 H(+)(out). Its function is as follows. Core subunit of the mitochondrial membrane respiratory chain NADH dehydrogenase (Complex I) which catalyzes electron transfer from NADH through the respiratory chain, using ubiquinone as an electron acceptor. Essential for the catalytic activity and assembly of complex I. The polypeptide is NADH dehydrogenase [ubiquinone] iron-sulfur protein 8, mitochondrial (NDUFS8) (Bos taurus (Bovine)).